Consider the following 329-residue polypeptide: DNA-directed RNA polymerase subunit alpha (329 aa).

The alpha N-terminal domain (alpha-NTD) stretch occupies residues 1–234; it reads MSGSVTEFLK…EQLDAFVELR (234 aa). The interval 248–329 is alpha C-terminal domain (alpha-CTD); the sequence is FDPILLRPVD…WPPESIAEKD (82 aa).

It belongs to the RNA polymerase alpha chain family. In terms of assembly, homodimer. The RNAP catalytic core consists of 2 alpha, 1 beta, 1 beta' and 1 omega subunit. When a sigma factor is associated with the core the holoenzyme is formed, which can initiate transcription.

It carries out the reaction RNA(n) + a ribonucleoside 5'-triphosphate = RNA(n+1) + diphosphate. DNA-dependent RNA polymerase catalyzes the transcription of DNA into RNA using the four ribonucleoside triphosphates as substrates. The chain is DNA-directed RNA polymerase subunit alpha from Pseudoalteromonas atlantica (strain T6c / ATCC BAA-1087).